We begin with the raw amino-acid sequence, 91 residues long: Small ribosomal subunit protein uS15 (91 aa).

The protein belongs to the universal ribosomal protein uS15 family. As to quaternary structure, part of the 30S ribosomal subunit. Forms a bridge to the 50S subunit in the 70S ribosome, contacting the 23S rRNA.

Functionally, one of the primary rRNA binding proteins, it binds directly to 16S rRNA where it helps nucleate assembly of the platform of the 30S subunit by binding and bridging several RNA helices of the 16S rRNA. Forms an intersubunit bridge (bridge B4) with the 23S rRNA of the 50S subunit in the ribosome. The sequence is that of Small ribosomal subunit protein uS15 from Amoebophilus asiaticus (strain 5a2).